The primary structure comprises 95 residues: uncharacterized protein (95 aa).

Residues 1 to 73 are disordered; sequence MAHFKDDLQT…AQQPSMRTEL (73 aa). 2 stretches are compositionally biased toward polar residues: residues 42 to 52 and 62 to 73; these read SNHSPSVQESP and GSAQQPSMRTEL.

This is an uncharacterized protein from Homo sapiens (Human).